Reading from the N-terminus, the 967-residue chain is Haze protective factor 1 (967 aa).

Positions 1–23 (MFNRFNKLQAALALVLYSQSALG) are cleaved as a signal peptide. 2 N-linked (GlcNAc...) asparagine glycosylation sites follow: Asn-28 and Asn-35. The segment at 72–301 (SSSTEVSSSI…STSSASTASG (230 aa)) is disordered. Tandem repeats lie at residues 93–105 (SITS…SGSS), 106–118 (SITS…SSSS), 119–131 (SATE…SGSS), 132–144 (SATE…SGSS), 153–165 (SATE…SGST), 166–178 (SATE…SGSS), 179–191 (SATE…SGSS), 192–204 (SATE…SGSS), and 205–217 (SATE…SGSS). Positions 93-278 (SITSSGSSVS…QSGSSVSGSS (186 aa)) are 13 X approximate repeats, Ser-rich. The stretch at 218-230 (SATESGSASSVPS) is one 1-10; approximate repeat. Residues 234–247 (SVTESGSSSSASES) form a 1-11; approximate repeat. One copy of the 1-12; approximate repeat lies at 248-259 (SITQSGTASGSS). The stretch at 266-278 (SVTQSGSSVSGSS) is one 1-13 repeat. N-linked (GlcNAc...) asparagine glycosylation is found at Asn-493, Asn-601, and Asn-638. 4 tandem repeats follow at residues 745 to 780 (SSKS…ATTT), 781 to 815 (SPKS…TTTV), 816 to 854 (SPKT…ETSA), and 855 to 893 (APKT…ATSA). A 4.5 X approximate tandem repeats, Thr-rich region spans residues 745-902 (SSKSYTTVTV…ASPKSYTTVT (158 aa)). Residues 836-857 (KTVTSEAPKETSETSETSAAPK) are disordered. Residues 894 to 902 (SPKSYTTVT) form a 2-5; truncated repeat. The GPI-anchor amidated alanine moiety is linked to residue Ala-946. Positions 947 to 967 (AGLNANTLNALVGIFVLAFFN) are cleaved as a propeptide — removed in mature form.

The protein belongs to the SRP1/TIP1 family. The GPI-anchor is attached to the protein in the endoplasmic reticulum and serves to target the protein to the cell surface. There, the glucosamine-inositol phospholipid moiety is cleaved off and the GPI-modified mannoprotein is covalently attached via its lipidless GPI glycan remnant to the 1,6-beta-glucan of the outer cell wall layer.

It is found in the secreted. It localises to the cell wall. The protein localises to the membrane. Functionally, involved in cell wall organization and biosynthesis. This Saccharomyces cerevisiae (strain ATCC 204508 / S288c) (Baker's yeast) protein is Haze protective factor 1 (HPF1).